The chain runs to 321 residues: Aspartate carbamoyltransferase catalytic subunit (321 aa).

The carbamoyl phosphate site is built by Arg57 and Thr58. Lys85 contributes to the L-aspartate binding site. Carbamoyl phosphate contacts are provided by Arg107, His142, and Gln145. Residues Arg175 and Arg229 each contribute to the L-aspartate site. 2 residues coordinate carbamoyl phosphate: Gly270 and Pro271.

This sequence belongs to the aspartate/ornithine carbamoyltransferase superfamily. ATCase family. In terms of assembly, heterododecamer (2C3:3R2) of six catalytic PyrB chains organized as two trimers (C3), and six regulatory PyrI chains organized as three dimers (R2).

The catalysed reaction is carbamoyl phosphate + L-aspartate = N-carbamoyl-L-aspartate + phosphate + H(+). Its pathway is pyrimidine metabolism; UMP biosynthesis via de novo pathway; (S)-dihydroorotate from bicarbonate: step 2/3. Its function is as follows. Catalyzes the condensation of carbamoyl phosphate and aspartate to form carbamoyl aspartate and inorganic phosphate, the committed step in the de novo pyrimidine nucleotide biosynthesis pathway. This chain is Aspartate carbamoyltransferase catalytic subunit, found in Mycobacterium leprae (strain TN).